Consider the following 156-residue polypeptide: Succinate dehydrogenase assembly factor 2-B, mitochondrial (156 aa).

Residues 1–24 (MLRQFIISTVGRRQPLLMILQSRL) constitute a mitochondrion transit peptide.

The protein belongs to the SDHAF2 family. Interacts with the flavoprotein subunit within the SDH catalytic dimer.

The protein localises to the mitochondrion matrix. Plays an essential role in the assembly of succinate dehydrogenase (SDH), an enzyme complex (also referred to as respiratory complex II) that is a component of both the tricarboxylic acid (TCA) cycle and the mitochondrial electron transport chain, and which couples the oxidation of succinate to fumarate with the reduction of ubiquinone (coenzyme Q) to ubiquinol. Required for flavinylation (covalent attachment of FAD) of the flavoprotein subunit of the SDH catalytic dimer. The polypeptide is Succinate dehydrogenase assembly factor 2-B, mitochondrial (Drosophila yakuba (Fruit fly)).